Reading from the N-terminus, the 483-residue chain is Jacalin-related lectin 13 (483 aa).

The segment at 1–20 (MTQKLESVGSERKSSEYMWD) is disordered. Jacalin-type lectin domains are found at residues 2–147 (TQKL…YVTW), 150–295 (PARM…YFTT), and 307–461 (FREK…YFFP).

The protein belongs to the jacalin lectin family.

The protein is Jacalin-related lectin 13 (JAL13) of Arabidopsis thaliana (Mouse-ear cress).